A 933-amino-acid polypeptide reads, in one-letter code: Phosphoenolpyruvate carboxylase (933 aa).

Residues H164 and K595 contribute to the active site.

This sequence belongs to the PEPCase type 1 family. Mg(2+) is required as a cofactor.

It catalyses the reaction oxaloacetate + phosphate = phosphoenolpyruvate + hydrogencarbonate. In terms of biological role, forms oxaloacetate, a four-carbon dicarboxylic acid source for the tricarboxylic acid cycle. This chain is Phosphoenolpyruvate carboxylase, found in Rhodopseudomonas palustris (strain HaA2).